The following is a 459-amino-acid chain: Zinc finger chaperone zpr1 (459 aa).

2 consecutive C4-type zinc fingers follow at residues 38 to 70 (CMEC…CPHC) and 259 to 291 (CPSC…CDRC).

Belongs to the ZPR1 family.

It localises to the cytoplasm. The protein resides in the nucleus. Functionally, acts as a protein folding chaperone for elongation factor 1-alpha. The polypeptide is Zinc finger chaperone zpr1 (Schizosaccharomyces pombe (strain 972 / ATCC 24843) (Fission yeast)).